We begin with the raw amino-acid sequence, 671 residues long: UvrABC system protein B (671 aa).

The Helicase ATP-binding domain maps to 25–412 (EGIDAGLAHQ…AGRIVEQVVR (388 aa)). 38–45 (GVTGSGKT) provides a ligand contact to ATP. Residues 91–114 (YYDYYQPEAYVPSSDTFIEKDASI) carry the Beta-hairpin motif. Positions 429–582 (QVDDLLSEIH…QIAFNLEHGI (154 aa)) constitute a Helicase C-terminal domain. Positions 601–624 (PGSRSKKRKGMAKAAEENARYENE) are disordered. Over residues 614–624 (AAEENARYENE) the composition is skewed to basic and acidic residues. The UVR domain occupies 632 to 667 (NKRIRQLEEKMYQLARDLEFEAAAQMRDEIGKLRER).

This sequence belongs to the UvrB family. Forms a heterotetramer with UvrA during the search for lesions. Interacts with UvrC in an incision complex.

The protein localises to the cytoplasm. Its function is as follows. The UvrABC repair system catalyzes the recognition and processing of DNA lesions. A damage recognition complex composed of 2 UvrA and 2 UvrB subunits scans DNA for abnormalities. Upon binding of the UvrA(2)B(2) complex to a putative damaged site, the DNA wraps around one UvrB monomer. DNA wrap is dependent on ATP binding by UvrB and probably causes local melting of the DNA helix, facilitating insertion of UvrB beta-hairpin between the DNA strands. Then UvrB probes one DNA strand for the presence of a lesion. If a lesion is found the UvrA subunits dissociate and the UvrB-DNA preincision complex is formed. This complex is subsequently bound by UvrC and the second UvrB is released. If no lesion is found, the DNA wraps around the other UvrB subunit that will check the other stand for damage. The protein is UvrABC system protein B of Pseudomonas syringae pv. syringae (strain B728a).